The following is a 251-amino-acid chain: MKVLGIFHKPSLKSVAEKFSEILFDENFHVEYVGSEIPSIEVDLTLVLGGDGTFLKAAHKVRNPLVGFKGGRLGFLSSYTLGDFDKFLEDLKNENFERDIRYFLKAGDFYTLNEVLLIRDPVQKMVDIQIFFQDGDFYFHADGLIISTPTGSTGYSLSLGGPIMLPNVNSFVITPVAPQFLASRSIIVPDDEEIIVRIDQEINLILDGMDFGKVREVNLKKSRRRIVILRPKDYNFSKSIKEKLGYGKRFL.

The active-site Proton acceptor is the D51. NAD(+)-binding positions include 51-52 (DG), K56, 113-114 (NE), K124, H140, D142, 153-158 (TGYSLS), and A177.

Belongs to the NAD kinase family. A divalent metal cation serves as cofactor.

The protein resides in the cytoplasm. It catalyses the reaction NAD(+) + ATP = ADP + NADP(+) + H(+). Its function is as follows. Involved in the regulation of the intracellular balance of NAD and NADP, and is a key enzyme in the biosynthesis of NADP. Catalyzes specifically the phosphorylation on 2'-hydroxyl of the adenosine moiety of NAD to yield NADP. The polypeptide is NAD kinase (Thermosipho melanesiensis (strain DSM 12029 / CIP 104789 / BI429)).